A 213-amino-acid polypeptide reads, in one-letter code: dITP/XTP pyrophosphatase (213 aa).

17–22 is a substrate binding site; sequence SNNAGK. The active-site Proton acceptor is the aspartate 78. A Mg(2+)-binding site is contributed by aspartate 78. Residues serine 79, 164-167, lysine 187, and 192-193 each bind substrate; these read FGYD and HR.

Belongs to the HAM1 NTPase family. In terms of assembly, homodimer. Mg(2+) is required as a cofactor.

The catalysed reaction is XTP + H2O = XMP + diphosphate + H(+). The enzyme catalyses dITP + H2O = dIMP + diphosphate + H(+). It catalyses the reaction ITP + H2O = IMP + diphosphate + H(+). Its function is as follows. Pyrophosphatase that catalyzes the hydrolysis of nucleoside triphosphates to their monophosphate derivatives, with a high preference for the non-canonical purine nucleotides XTP (xanthosine triphosphate), dITP (deoxyinosine triphosphate) and ITP. Seems to function as a house-cleaning enzyme that removes non-canonical purine nucleotides from the nucleotide pool, thus preventing their incorporation into DNA/RNA and avoiding chromosomal lesions. The polypeptide is dITP/XTP pyrophosphatase (Bordetella parapertussis (strain 12822 / ATCC BAA-587 / NCTC 13253)).